A 193-amino-acid chain; its full sequence is 3-isopropylmalate dehydratase small subunit (193 aa).

It belongs to the LeuD family. LeuD type 1 subfamily. Heterodimer of LeuC and LeuD.

The catalysed reaction is (2R,3S)-3-isopropylmalate = (2S)-2-isopropylmalate. The protein operates within amino-acid biosynthesis; L-leucine biosynthesis; L-leucine from 3-methyl-2-oxobutanoate: step 2/4. Its function is as follows. Catalyzes the isomerization between 2-isopropylmalate and 3-isopropylmalate, via the formation of 2-isopropylmaleate. This Bacillus thuringiensis subsp. konkukian (strain 97-27) protein is 3-isopropylmalate dehydratase small subunit.